A 249-amino-acid chain; its full sequence is uncharacterized protein (249 aa).

Residue 11-34 (IFGGRSQIGGELARRLAAGATMVL) coordinates NADP(+). Serine 142 is a substrate binding site. Tyrosine 155 (proton acceptor) is an active-site residue.

Belongs to the short-chain dehydrogenases/reductases (SDR) family.

This is an uncharacterized protein from Mycobacterium tuberculosis (strain CDC 1551 / Oshkosh).